Here is a 213-residue protein sequence, read N- to C-terminus: ATP phosphoribosyltransferase (213 aa).

It belongs to the ATP phosphoribosyltransferase family. Short subfamily. Heteromultimer composed of HisG and HisZ subunits.

Its subcellular location is the cytoplasm. It catalyses the reaction 1-(5-phospho-beta-D-ribosyl)-ATP + diphosphate = 5-phospho-alpha-D-ribose 1-diphosphate + ATP. The protein operates within amino-acid biosynthesis; L-histidine biosynthesis; L-histidine from 5-phospho-alpha-D-ribose 1-diphosphate: step 1/9. Its function is as follows. Catalyzes the condensation of ATP and 5-phosphoribose 1-diphosphate to form N'-(5'-phosphoribosyl)-ATP (PR-ATP). Has a crucial role in the pathway because the rate of histidine biosynthesis seems to be controlled primarily by regulation of HisG enzymatic activity. The sequence is that of ATP phosphoribosyltransferase from Variovorax paradoxus (strain S110).